The sequence spans 455 residues: Elongation factor Tu, mitochondrial (455 aa).

The transit peptide at 1-46 (MTTMAAATLLRATPHFSGLAAGRTFLLQGLLRLLKAPALPLLCRGL) directs the protein to the mitochondrion. The tr-type G domain maps to 58 to 254 (KPHVNVGTIG…AVDTYIPVPA (197 aa)). Residues 67-74 (GHVDHGKT) are G1. 5 residues coordinate GTP: aspartate 70, glycine 72, lysine 73, threonine 74, and threonine 75. Threonine 74 is a Mg(2+) binding site. The residue at position 82 (lysine 82) is an N6-acetyllysine. Lysine 91 bears the N6-acetyllysine; alternate mark. Lysine 91 is modified (N6-succinyllysine; alternate). Residues 108 to 112 (GITIN) are G2. Residues 129 to 132 (DCPG) are G3. The GTP site is built by asparagine 184, aspartate 187, serine 222, alanine 223, and leucine 224. The G4 stretch occupies residues 184–187 (NKAD). A G5 region spans residues 222 to 224 (SAL). At lysine 237 the chain carries N6-succinyllysine. Lysine 259 is subject to N6-acetyllysine. At threonine 281 the chain carries Phosphothreonine. Lysine 289 bears the N6-succinyllysine mark. Serine 315 is modified (phosphoserine). Residues lysine 364 and lysine 421 each carry the N6-acetyllysine modification.

The protein belongs to the TRAFAC class translation factor GTPase superfamily. Classic translation factor GTPase family. EF-Tu/EF-1A subfamily. In terms of assembly, interacts with NLRX1. Interacts with ATG16L1. As to quaternary structure, (Microbial infection) Interacts with human parainfluenza virus 3 matrix protein; this interaction inhibits RLR-mediated type I interferon production while promoting autophagy. (Microbial infection) Interacts with Hantaan hantavirus glycoprotein N; this interaction contributes to the virus-induced degradation of mitochondria by autophagy, which leads to degradation of MAVS and inhibition of type I interferon (IFN) responses.

Its subcellular location is the mitochondrion. The catalysed reaction is GTP + H2O = GDP + phosphate + H(+). Functionally, GTP hydrolase that promotes the GTP-dependent binding of aminoacyl-tRNA to the A-site of ribosomes during protein biosynthesis. Also plays a role in the regulation of autophagy and innate immunity. Recruits ATG5-ATG12 and NLRX1 at mitochondria and serves as a checkpoint of the RIGI-MAVS pathway. In turn, inhibits RLR-mediated type I interferon while promoting autophagy. The chain is Elongation factor Tu, mitochondrial (TUFM) from Homo sapiens (Human).